We begin with the raw amino-acid sequence, 74 residues long: Putative membrane protein insertion efficiency factor (74 aa).

The protein belongs to the UPF0161 family.

Its subcellular location is the cell inner membrane. Functionally, could be involved in insertion of integral membrane proteins into the membrane. The polypeptide is Putative membrane protein insertion efficiency factor (Anaeromyxobacter sp. (strain Fw109-5)).